The chain runs to 170 residues: Protein GrpE (170 aa).

The disordered stretch occupies residues 1–29 (MSEEIKNEEIVEEVEATEEVVETPEKSEL). Positions 10–22 (IVEEVEATEEVVE) are enriched in acidic residues.

It belongs to the GrpE family. Homodimer.

Its subcellular location is the cytoplasm. Its function is as follows. Participates actively in the response to hyperosmotic and heat shock by preventing the aggregation of stress-denatured proteins, in association with DnaK and GrpE. It is the nucleotide exchange factor for DnaK and may function as a thermosensor. Unfolded proteins bind initially to DnaJ; upon interaction with the DnaJ-bound protein, DnaK hydrolyzes its bound ATP, resulting in the formation of a stable complex. GrpE releases ADP from DnaK; ATP binding to DnaK triggers the release of the substrate protein, thus completing the reaction cycle. Several rounds of ATP-dependent interactions between DnaJ, DnaK and GrpE are required for fully efficient folding. The chain is Protein GrpE from Streptococcus suis (strain 98HAH33).